We begin with the raw amino-acid sequence, 73 residues long: Disintegrin lachesin (73 aa).

Residues 1-73 enclose the Disintegrin domain; the sequence is EAGEECDCGA…ADCPRNGYYG (73 aa). 6 disulfide bridges follow: Cys6-Cys21, Cys8-Cys16, Cys15-Cys38, Cys29-Cys35, Cys34-Cys59, and Cys47-Cys66. Positions 51–53 match the Cell attachment site motif; sequence RGD. Residues 51–73 form a disordered region; sequence RGDNPDDRCTGQSADCPRNGYYG.

This sequence belongs to the venom metalloproteinase (M12B) family. P-II subfamily. P-IIa sub-subfamily. As to quaternary structure, monomer (disintegrin). In terms of tissue distribution, expressed by the venom gland.

It is found in the secreted. Functionally, inhibits fibrinogen interaction with platelets. Acts by binding to alpha-IIb/beta-3 (ITGA2B/ITGB3) on the platelet surface and inhibits aggregation induced by ADP, thrombin, platelet-activating factor and collagen. This is Disintegrin lachesin from Lachesis muta muta (Bushmaster).